Here is a 587-residue protein sequence, read N- to C-terminus: Kelch-like protein 3 (587 aa).

The interval 1-22 is disordered; the sequence is MDGESIKPSSQPLIQTGDDEKN. Residue S10 is modified to Phosphoserine. In terms of domain architecture, BTB spans 50–117; sequence CDVMIVAEDV…IYTAEIEVTE (68 aa). One can recognise a BACK domain in the interval 152-254; that stretch reads CLGIRAFADV…PRDYLVQTVE (103 aa). Phosphothreonine is present on T295. 6 Kelch repeats span residues 302 to 347, 348 to 394, 396 to 441, 442 to 490, 491 to 537, and 539 to 585; these read VMIV…FMAG, HVYA…VLND, LYAV…VVEG, KLYA…VLSG, QLYA…AVNG, and LYVV…VIHK. The residue at position 375 (T375) is a Phosphothreonine. Phosphoserine occurs at positions 376 and 433.

This sequence belongs to the KLHL3 family. As to quaternary structure, homodimer. Component of the BCR(KLHL3) E3 ubiquitin ligase complex, at least composed of CUL3 and KLHL3 and RBX1. Interacts with CLDN8. In terms of processing, phosphorylation at Ser-433 by PKA or PKC decreases the interaction with WNK1 and WNK4, leading to inhibit their degradation by the BCR(KLHL3) complex. Phosphorylated at Ser-433 by PKC in response to angiotensin II signaling, decreasing ability to promote degradation of WNK1 and WNK4, leading to activation of Na-Cl cotransporter SLC12A3/NCC. Phosphorylation at Ser-433 is increased by insulin. Dephosphorylated at Ser-433 by calcineurin PPP3CA, promoting degradation of WNK1 and WNK4.

The protein resides in the cytoplasm. It localises to the cytoskeleton. The protein localises to the cytosol. Its pathway is protein modification; protein ubiquitination. Its function is as follows. Substrate-specific adapter of a BCR (BTB-CUL3-RBX1) E3 ubiquitin ligase complex that acts as a regulator of ion transport in the distal nephron. The BCR(KLHL3) complex acts by mediating ubiquitination and degradation of WNK1 and WNK4, two activators of Na-Cl cotransporter SLC12A3/NCC in distal convoluted tubule cells of kidney, thereby regulating NaCl reabsorption. The BCR(KLHL3) complex also mediates ubiquitination and degradation of WNK3. The BCR(KLHL3) complex also mediates ubiquitination of CLDN8, a tight-junction protein required for paracellular chloride transport in the kidney, leading to its degradation. This Bos taurus (Bovine) protein is Kelch-like protein 3 (KLHL3).